Reading from the N-terminus, the 309-residue chain is Probable HTH-type transcriptional regulator LtrA (309 aa).

The HTH lysR-type domain maps to 1–61; that stretch reads MNLNLLPDLA…QRTTRKLRLS (61 aa). The H-T-H motif DNA-binding region spans 21 to 40; sequence FSAVARQNGITPSAVSRSVS.

The protein belongs to the LysR transcriptional regulatory family.

This chain is Probable HTH-type transcriptional regulator LtrA (ltrA), found in Klebsiella pneumoniae.